The primary structure comprises 204 residues: Large ribosomal subunit protein bL17 (204 aa).

Residues Gln-124 to Ser-204 form a disordered region. The span at Glu-128–Lys-142 shows a compositional bias: basic and acidic residues. Positions Ser-156 to Val-191 are enriched in low complexity. Acidic residues predominate over residues Glu-192–Ser-204.

Belongs to the bacterial ribosomal protein bL17 family. In terms of assembly, part of the 50S ribosomal subunit. Contacts protein L32.

In Frankia alni (strain DSM 45986 / CECT 9034 / ACN14a), this protein is Large ribosomal subunit protein bL17.